Reading from the N-terminus, the 303-residue chain is Acetylglutamate kinase (303 aa).

Substrate contacts are provided by residues Gly-67–Gly-68, Arg-89, and Asn-193.

This sequence belongs to the acetylglutamate kinase family. ArgB subfamily.

The protein localises to the cytoplasm. The catalysed reaction is N-acetyl-L-glutamate + ATP = N-acetyl-L-glutamyl 5-phosphate + ADP. It participates in amino-acid biosynthesis; L-arginine biosynthesis; N(2)-acetyl-L-ornithine from L-glutamate: step 2/4. Its function is as follows. Catalyzes the ATP-dependent phosphorylation of N-acetyl-L-glutamate. This Acinetobacter baylyi (strain ATCC 33305 / BD413 / ADP1) protein is Acetylglutamate kinase.